Consider the following 218-residue polypeptide: Testis expressed protein 56 (218 aa).

The chain is Testis expressed protein 56 (Tex56) from Rattus norvegicus (Rat).